Consider the following 786-residue polypeptide: MEGEGRGRWALGLLRTFDAGEFAGWEKVGSGGFGQVYKVRHVHWKTWLAIKCSPSLHVDDRERMELLEEAKKMEMAKFRYILPVYGICQEPVGLVMEYMETGSLEKLLASEPLPWDLRFRIVHETAVGMNFLHCMSPPLLHLDLKPANILLDAHYHVKISDFGLAKCNGMSHSHDLSMDGLFGTIAYLPPERIREKSRLFDTKHDVYSFAIVIWGVLTQKKPFADEKNILHIMMKVVKGHRPELPPICRPRPRACASLIGLMQRCWHADPQVRPTFQEITSETEDLCEKPDEEVKDLAHEPGEKSSLESKSEARPESSRLKRASAPPFDNDCSLSELLSQLDSGISQTLEGPEELSRSSSECKLPSSSSGKRLSGVSSVDSAFSSRGSLSLSFEREASTGDLGPTDIQKKKLVDAIISGDTSRLMKILQPQDVDLVLDSSASLLHLAVEAGQEECVKWLLLNNANPNLTNRKGSTPLHMAVERKGRGIVELLLARKTSVNAKDEDQWTALHFAAQNGDEASTRLLLEKNASVNEVDFEGRTPMHVACQHGQENIVRTLLRRGVDVGLQGKDAWLPLHYAAWQGHLPIVKLLAKQPGVSVNAQTLDGRTPLHLAAQRGHYRVARILIDLCSDVNICSLQAQTPLHVAAETGHTSTARLLLHRGAGKEALTSEGYTALHLAAQNGHLATVKLLIEEKADVMARGPLNQTALHLAAARGHSEVVEELVSADLIDLSDEQGLSALHLAAQGRHSQTVETLLKHGAHINLQSLKFQGGQSSAATLLRRSKT.

Residues 22–286 (FAGWEKVGSG…QEITSETEDL (265 aa)) enclose the Protein kinase domain. ATP-binding positions include 28–36 (VGSGGFGQV) and lysine 51. A Glycyl lysine isopeptide (Lys-Gly) (interchain with G-Cter in ubiquitin) cross-link involves residue lysine 51. The active-site Proton acceptor is the aspartate 143. Lysine 145 participates in a covalent cross-link: Glycyl lysine isopeptide (Lys-Gly) (interchain with G-Cter in ubiquitin). Disordered regions lie at residues 293 to 328 (EVKDLAHEPGEKSSLESKSEARPESSRLKRASAPPF) and 347 to 378 (QTLEGPEELSRSSSECKLPSSSSGKRLSGVSS). Basic and acidic residues predominate over residues 295-319 (KDLAHEPGEKSSLESKSEARPESSR). The segment covering 357–378 (RSSSECKLPSSSSGKRLSGVSS) has biased composition (low complexity). ANK repeat units lie at residues 439-468 (SSASLLHLAVEAGQEECVKWLLLNNANPNL), 472-501 (KGSTPLHMAVERKGRGIVELLLARKTSVNA), 505-534 (DQWTALHFAAQNGDEASTRLLLEKNASVNE), 538-567 (EGRTPMHVACQHGQENIVRTLLRRGVDVGL), 571-601 (DAWLPLHYAAWQGHLPIVKLLAKQPGVSVNA), 605-634 (DGRTPLHLAAQRGHYRVARILIDLCSDVNI), 638-667 (QAQTPLHVAAETGHTSTARLLLHRGAGKEA), 671-700 (EGYTALHLAAQNGHLATVKLLIEEKADVMA), 704-734 (LNQTALHLAAARGHSEVVEELVSADLIDLSD), and 736-765 (QGLSALHLAAQGRHSQTVETLLKHGAHINL).

It belongs to the protein kinase superfamily. TKL Ser/Thr protein kinase family. As to quaternary structure, interacts with PRKCB. Interacts with TRAF1, TRAF2, TRAF3 and TRAF5. Interacts with BIRC2/c-IAP1, BIRC3/c-IAP2 and XIAP/BIRC4. In terms of processing, may be phosphorylated by MAP3K2 and MAP3K3. Proteolytically cleaved by during Fas-induced apoptosis. Cleavage at Asp-342 and Asp-380. Post-translationally, polyubiquitinated with 'Lys-48' and 'Lys-63'-linked chains by BIRC2/c-IAP1 and BIRC3/c-IAP2, leading to activation of NF-kappa-B. Expressed in the epidermis of the skin (at protein level). Ubiquitously expressed, with an abundant expression in the thymus, bone marrow, pro-B, pre-B and immature B cells and a weak expression in the spleen.

It localises to the cytoplasm. The protein resides in the membrane. It carries out the reaction L-seryl-[protein] + ATP = O-phospho-L-seryl-[protein] + ADP + H(+). The enzyme catalyses L-threonyl-[protein] + ATP = O-phospho-L-threonyl-[protein] + ADP + H(+). In terms of biological role, serine/threonine protein kinase. Required for embryonic skin development and correct skin homeostasis in adults, via phosphorylation of PKP1 and subsequent promotion of keratinocyte differentiation and cell adhesion. It is a direct transcriptional target of TP63. Plays a role in NF-kappa-B activation. This Mus musculus (Mouse) protein is Receptor-interacting serine/threonine-protein kinase 4 (Ripk4).